We begin with the raw amino-acid sequence, 149 residues long: Aquaporin-like protein 2 (149 aa).

The disordered stretch occupies residues 1–35 (MSNESNDLEKNISHLDPTGVDNAYIPPEQPETKHS). The Cytoplasmic portion of the chain corresponds to 1 to 47 (MSNESNDLEKNISHLDPTGVDNAYIPPEQPETKHSRFNIDRDTLRNH). The chain crosses the membrane as a helical span at residues 48–68 (FIAAVGEFCGTFMFLWCAYVI). The Extracellular portion of the chain corresponds to 69 to 89 (CNVANHDVALTTEPEGSHPGQ). Residues 90–110 (LIMIALGFGFSVMFSIWCFWW) traverse the membrane as a helical segment. At 111 to 149 (GFEPSRFSLFVFGQSHLSSQMCSDVVSSDHCWDGCWWCR) the chain is on the cytoplasmic side.

It belongs to the MIP/aquaporin (TC 1.A.8) family.

Its subcellular location is the endoplasmic reticulum membrane. It is found in the cell membrane. In terms of biological role, water channel required to facilitate the transport of water across membranes. Involved in freeze tolerance, osmotolerance and cell flocculation in liquid cultures. Is non-functional in most laboratory strains. The protein is Aquaporin-like protein 2 (AQY2-2) of Saccharomyces cerevisiae (strain RM11-1a) (Baker's yeast).